The sequence spans 185 residues: Shikimate kinase (185 aa).

12–17 (GSGKTT) serves as a coordination point for ATP. Thr16 contributes to the Mg(2+) binding site. Residues Asp34, Arg58, and Gly79 each coordinate substrate. Position 116 (Arg116) interacts with ATP. Position 135 (Arg135) interacts with substrate.

Belongs to the shikimate kinase family. Monomer. Mg(2+) is required as a cofactor.

The protein resides in the cytoplasm. The enzyme catalyses shikimate + ATP = 3-phosphoshikimate + ADP + H(+). It participates in metabolic intermediate biosynthesis; chorismate biosynthesis; chorismate from D-erythrose 4-phosphate and phosphoenolpyruvate: step 5/7. In terms of biological role, catalyzes the specific phosphorylation of the 3-hydroxyl group of shikimic acid using ATP as a cosubstrate. This is Shikimate kinase from Corynebacterium jeikeium (strain K411).